The chain runs to 104 residues: Probable RNA-binding protein PA4753 (104 aa).

Positions 1 to 97 (MALTQEQKKQ…NPKPNKNLSN (97 aa)) constitute a CRM domain.

This Pseudomonas aeruginosa (strain ATCC 15692 / DSM 22644 / CIP 104116 / JCM 14847 / LMG 12228 / 1C / PRS 101 / PAO1) protein is Probable RNA-binding protein PA4753.